The sequence spans 444 residues: ATP-dependent 6-phosphofructokinase 2 (444 aa).

Residue Ser-55 is modified to Phosphoserine. Residues Gly-86, 149–150, and 174–177 each bind ATP; these read RG and GDGT. Asp-175 lines the Mg(2+) pocket. Residues 203–205, 248–250, Glu-304, and 362–365 contribute to the substrate site; these read TVD, MGR, and YMIR. Asp-205 (proton acceptor) is an active-site residue.

This sequence belongs to the phosphofructokinase type A (PFKA) family. PPi-dependent PFK group II subfamily. Atypical ATP-dependent clade 'X' sub-subfamily. Homotetramer. Requires Mg(2+) as cofactor. As to expression, mostly expressed in roots and stems.

It is found in the cytoplasm. The enzyme catalyses beta-D-fructose 6-phosphate + ATP = beta-D-fructose 1,6-bisphosphate + ADP + H(+). It functions in the pathway carbohydrate degradation; glycolysis; D-glyceraldehyde 3-phosphate and glycerone phosphate from D-glucose: step 3/4. With respect to regulation, allosterically activated by AMP. Functionally, catalyzes the phosphorylation of D-fructose 6-phosphate to fructose 1,6-bisphosphate by ATP, the first committing step of glycolysis. In Arabidopsis thaliana (Mouse-ear cress), this protein is ATP-dependent 6-phosphofructokinase 2.